The following is a 150-amino-acid chain: Large ribosomal subunit protein bL9 (150 aa).

The protein belongs to the bacterial ribosomal protein bL9 family.

In terms of biological role, binds to the 23S rRNA. The sequence is that of Large ribosomal subunit protein bL9 from Leptothrix cholodnii (strain ATCC 51168 / LMG 8142 / SP-6) (Leptothrix discophora (strain SP-6)).